Here is a 476-residue protein sequence, read N- to C-terminus: Serine/threonine-protein kinase WAG1 (476 aa).

Residues 93–400 (FKLVRHLGTG…AQDIKRHEFF (308 aa)) form the Protein kinase domain. ATP-binding positions include 99–107 (LGTGNLGRV) and lysine 124. The Proton acceptor role is filled by aspartate 219.

This sequence belongs to the protein kinase superfamily. Ser/Thr protein kinase family. Expressed in root tips and lateral root primordia.

It localises to the cytoplasm. The protein resides in the cytosol. The enzyme catalyses L-seryl-[protein] + ATP = O-phospho-L-seryl-[protein] + ADP + H(+). It carries out the reaction L-threonyl-[protein] + ATP = O-phospho-L-threonyl-[protein] + ADP + H(+). In terms of biological role, serine/threonine-protein kinase involved in the regulation of auxin signaling. Acts as a positive regulator of cellular auxin efflux and regulates organ development by enhancing PIN-mediated polar auxin transport. Phosphorylates conserved serine residues in the PIN auxin efflux carriers. Phosphorylation of PIN proteins is required and sufficient for apical-basal PIN polarity that enables directional intercellular auxin fluxes, which mediate differential growth, tissue patterning and organogenesis. Acts as a suppressor of root waving. The sequence is that of Serine/threonine-protein kinase WAG1 (WAG1) from Arabidopsis thaliana (Mouse-ear cress).